Reading from the N-terminus, the 490-residue chain is Bifunctional protein HldE (490 aa).

The segment at 1-330 (MERKEIESLF…AEIGHAHPDS (330 aa)) is ribokinase. 205–208 (NRKE) contacts ATP. Asp-275 is an active-site residue. The tract at residues 356–490 (FTNGCFDLLH…EKIRTGSIKE (135 aa)) is cytidylyltransferase.

The protein in the N-terminal section; belongs to the carbohydrate kinase PfkB family. In the C-terminal section; belongs to the cytidylyltransferase family. As to quaternary structure, homodimer.

The catalysed reaction is D-glycero-beta-D-manno-heptose 7-phosphate + ATP = D-glycero-beta-D-manno-heptose 1,7-bisphosphate + ADP + H(+). It catalyses the reaction D-glycero-beta-D-manno-heptose 1-phosphate + ATP + H(+) = ADP-D-glycero-beta-D-manno-heptose + diphosphate. It functions in the pathway nucleotide-sugar biosynthesis; ADP-L-glycero-beta-D-manno-heptose biosynthesis; ADP-L-glycero-beta-D-manno-heptose from D-glycero-beta-D-manno-heptose 7-phosphate: step 1/4. It participates in nucleotide-sugar biosynthesis; ADP-L-glycero-beta-D-manno-heptose biosynthesis; ADP-L-glycero-beta-D-manno-heptose from D-glycero-beta-D-manno-heptose 7-phosphate: step 3/4. In terms of biological role, catalyzes the phosphorylation of D-glycero-D-manno-heptose 7-phosphate at the C-1 position to selectively form D-glycero-beta-D-manno-heptose-1,7-bisphosphate. Catalyzes the ADP transfer from ATP to D-glycero-beta-D-manno-heptose 1-phosphate, yielding ADP-D-glycero-beta-D-manno-heptose. This chain is Bifunctional protein HldE, found in Geotalea uraniireducens (strain Rf4) (Geobacter uraniireducens).